The primary structure comprises 302 residues: Pseudouridine-5'-phosphate glycosidase (302 aa).

Glu25 functions as the Proton donor in the catalytic mechanism. Substrate is bound by residues Lys86 and Val106. Position 138 (Asp138) interacts with Mn(2+). A substrate-binding site is contributed by 140–142 (SAD). Lys159 serves as the catalytic Nucleophile.

This sequence belongs to the pseudouridine-5'-phosphate glycosidase family. As to quaternary structure, homotrimer. Requires Mn(2+) as cofactor.

The enzyme catalyses D-ribose 5-phosphate + uracil = psi-UMP + H2O. Catalyzes the reversible cleavage of pseudouridine 5'-phosphate (PsiMP) to ribose 5-phosphate and uracil. Functions biologically in the cleavage direction, as part of a pseudouridine degradation pathway. This is Pseudouridine-5'-phosphate glycosidase from Jannaschia sp. (strain CCS1).